We begin with the raw amino-acid sequence, 736 residues long: Microtubule-associated protein mu-2 (736 aa).

This sequence belongs to the orthoreovirus mu-2 protein family. As to quaternary structure, interacts with protein mu-NS; in viral inclusions. Interacts with polymerase lambda-3; this interaction stimulates the ATPase activity of mu-2. A divalent metal cation is required as a cofactor.

The protein resides in the virion. It localises to the host cytoplasm. It is found in the host cytoskeleton. Minor inner capsid (core) component. Displays NTPase and RNA 5'-triphosphatase (RTPase) activities. ATP is the preferred substrate for hydrolysis. May function as a cofactor of polymerase lambda-3. Associates with microtubules and plays a role in the formation, structural organization and morphology of viral inclusions, where the assembly of cores and the replication of viral RNA occur. Together with mu-NS, recruits the other core proteins to these inclusions. In Mammalia (T1L), this protein is Microtubule-associated protein mu-2 (M1).